The chain runs to 383 residues: MTKPLRIGIVAGELSGDTLGEGFIKSIKAQYPDAEFVGIGGPKMIAQGCDSLFDMEELAVMGLVEVLGRLPRLLKVKAELVRYFTQNPPDVFIGIDAPDFNLRLEKTLKDNGIKTVHYVSPSVWAWRPKRIFKIDAATDLVLAFLPFEKAFYDKYNVACEFIGHTLADAIPMETDKFAARELLGLEQDRKWLAVLPGSRGGEVALIAKPFIETCQRIHKQHPDMGFVVAAVNEKRREQFETIWKETAPELDFVIIQDTARNVMTAADAVLLASGTVALECMLVKRPMVVGYQVNKLTGWIAQKLSITEFVSLPNVLAGKELVQEFIQEECHPDFLYPAMEKVLDNDNSELIEKFTEMHQWIRKDADKQAANAVLRLINKETAE.

Belongs to the LpxB family.

The catalysed reaction is a lipid X + a UDP-2-N,3-O-bis[(3R)-3-hydroxyacyl]-alpha-D-glucosamine = a lipid A disaccharide + UDP + H(+). Its pathway is bacterial outer membrane biogenesis; LPS lipid A biosynthesis. Its function is as follows. Condensation of UDP-2,3-diacylglucosamine and 2,3-diacylglucosamine-1-phosphate to form lipid A disaccharide, a precursor of lipid A, a phosphorylated glycolipid that anchors the lipopolysaccharide to the outer membrane of the cell. This chain is Lipid-A-disaccharide synthase, found in Aliivibrio fischeri (strain MJ11) (Vibrio fischeri).